The sequence spans 548 residues: WEB family protein At1g12150 (548 aa).

Residues 71 to 544 (KEFMKIKQKL…ELQRWRQQEN (474 aa)) adopt a coiled-coil conformation. The span at 430 to 448 (VREEMKMISQKQESKKQDE) shows a compositional bias: basic and acidic residues. The disordered stretch occupies residues 430–455 (VREEMKMISQKQESKKQDEESSGSKI).

It belongs to the WEB family.

The sequence is that of WEB family protein At1g12150 from Arabidopsis thaliana (Mouse-ear cress).